The sequence spans 91 residues: UPF0147 protein DKAM_0139 (91 aa).

Belongs to the UPF0147 family.

This is UPF0147 protein DKAM_0139 from Desulfurococcus amylolyticus (strain DSM 18924 / JCM 16383 / VKM B-2413 / 1221n) (Desulfurococcus kamchatkensis).